The sequence spans 382 residues: Dual-specificity RNA methyltransferase RlmN (382 aa).

Glu94 serves as the catalytic Proton acceptor. Residues 100 to 336 (EANRGTLCVS…NTITRKTRGD (237 aa)) form the Radical SAM core domain. Cys107 and Cys342 form a disulfide bridge. Positions 114, 118, and 121 each coordinate [4Fe-4S] cluster. Residues 168 to 169 (GE), Ser200, 222 to 224 (SLH), and Asn299 each bind S-adenosyl-L-methionine. The S-methylcysteine intermediate role is filled by Cys342.

Belongs to the radical SAM superfamily. RlmN family. [4Fe-4S] cluster serves as cofactor.

The protein resides in the cytoplasm. It carries out the reaction adenosine(2503) in 23S rRNA + 2 reduced [2Fe-2S]-[ferredoxin] + 2 S-adenosyl-L-methionine = 2-methyladenosine(2503) in 23S rRNA + 5'-deoxyadenosine + L-methionine + 2 oxidized [2Fe-2S]-[ferredoxin] + S-adenosyl-L-homocysteine. It catalyses the reaction adenosine(37) in tRNA + 2 reduced [2Fe-2S]-[ferredoxin] + 2 S-adenosyl-L-methionine = 2-methyladenosine(37) in tRNA + 5'-deoxyadenosine + L-methionine + 2 oxidized [2Fe-2S]-[ferredoxin] + S-adenosyl-L-homocysteine. In terms of biological role, specifically methylates position 2 of adenine 2503 in 23S rRNA and position 2 of adenine 37 in tRNAs. m2A2503 modification seems to play a crucial role in the proofreading step occurring at the peptidyl transferase center and thus would serve to optimize ribosomal fidelity. This chain is Dual-specificity RNA methyltransferase RlmN, found in Legionella pneumophila subsp. pneumophila (strain Philadelphia 1 / ATCC 33152 / DSM 7513).